Reading from the N-terminus, the 488-residue chain is UDP-N-acetylmuramate--L-alanine ligase (488 aa).

122-128 (GTHGKTT) is a binding site for ATP.

Belongs to the MurCDEF family.

Its subcellular location is the cytoplasm. The enzyme catalyses UDP-N-acetyl-alpha-D-muramate + L-alanine + ATP = UDP-N-acetyl-alpha-D-muramoyl-L-alanine + ADP + phosphate + H(+). It functions in the pathway cell wall biogenesis; peptidoglycan biosynthesis. Functionally, cell wall formation. This chain is UDP-N-acetylmuramate--L-alanine ligase, found in Mycobacterium marinum (strain ATCC BAA-535 / M).